The primary structure comprises 318 residues: Bis(5'-nucleosyl)-tetraphosphatase, symmetrical (318 aa).

Residues proline 269–aspartate 318 are disordered. The segment covering alanine 282 to glycine 297 has biased composition (basic residues). The segment covering asparagine 298–proline 311 has biased composition (low complexity).

Belongs to the Ap4A hydrolase family.

It catalyses the reaction P(1),P(4)-bis(5'-adenosyl) tetraphosphate + H2O = 2 ADP + 2 H(+). Its function is as follows. Hydrolyzes diadenosine 5',5'''-P1,P4-tetraphosphate to yield ADP. The protein is Bis(5'-nucleosyl)-tetraphosphatase, symmetrical of Xanthomonas euvesicatoria pv. vesicatoria (strain 85-10) (Xanthomonas campestris pv. vesicatoria).